A 259-amino-acid polypeptide reads, in one-letter code: Global transcriptional regulator CodY (259 aa).

The tract at residues 1–155 (MSLLSRMRKI…GATVVGMEIL (155 aa)) is GAF domain. The H-T-H motif DNA-binding region spans 203–222 (ASKIADRVGITRSVIVNALR). Ser215 carries the post-translational modification Phosphoserine.

This sequence belongs to the CodY family.

Its subcellular location is the cytoplasm. In terms of biological role, DNA-binding global transcriptional regulator which is involved in the adaptive response to starvation and acts by directly or indirectly controlling the expression of numerous genes in response to nutrient availability. During rapid exponential growth, CodY is highly active and represses genes whose products allow adaptation to nutrient depletion. The polypeptide is Global transcriptional regulator CodY (Halalkalibacterium halodurans (strain ATCC BAA-125 / DSM 18197 / FERM 7344 / JCM 9153 / C-125) (Bacillus halodurans)).